The chain runs to 498 residues: Galactose-1-phosphate uridylyltransferase (498 aa).

The protein belongs to the galactose-1-phosphate uridylyltransferase type 2 family.

Its subcellular location is the cytoplasm. It catalyses the reaction alpha-D-galactose 1-phosphate + UDP-alpha-D-glucose = alpha-D-glucose 1-phosphate + UDP-alpha-D-galactose. Its pathway is carbohydrate metabolism; galactose metabolism. The polypeptide is Galactose-1-phosphate uridylyltransferase (Clostridium perfringens (strain 13 / Type A)).